Here is a 247-residue protein sequence, read N- to C-terminus: Cytochrome c oxidase subunit 2 (247 aa).

Residues 1-11 (MFYLLNSIIMN) form the signal peptide. Topologically, residues 12-38 (DVPTPYGMYFQDSATPNQEGILELHDN) are mitochondrial intermembrane. A helical transmembrane segment spans residues 39–59 (IMFYLFIILGLVSWLLFTIVR). Over 60–78 (TYSKNPIAYKYIKHGQTIE) the chain is Mitochondrial matrix. The chain crosses the membrane as a helical span at residues 79–101 (IIWTIFPAVILLIIAFPSFILLY). Over 102–247 (LCDEVISPAM…PAFLEWLNEQ (146 aa)) the chain is Mitochondrial intermembrane. Positions 182, 217, 219, 221, 225, and 228 each coordinate Cu cation. Position 219 (E219) interacts with Mg(2+).

It belongs to the cytochrome c oxidase subunit 2 family. In terms of assembly, component of the cytochrome c oxidase (complex IV, CIV), a multisubunit enzyme composed of a catalytic core of 3 subunits and several supernumerary subunits. The complex exists as a monomer or a dimer and forms supercomplexes (SCs) in the inner mitochondrial membrane with ubiquinol-cytochrome c oxidoreductase (cytochrome b-c1 complex, complex III, CIII). Requires Cu cation as cofactor. In terms of processing, the signal sequence of COX2 is processed by IMP1.

The protein localises to the mitochondrion inner membrane. It catalyses the reaction 4 Fe(II)-[cytochrome c] + O2 + 8 H(+)(in) = 4 Fe(III)-[cytochrome c] + 2 H2O + 4 H(+)(out). Its function is as follows. Component of the cytochrome c oxidase, the last enzyme in the mitochondrial electron transport chain which drives oxidative phosphorylation. The respiratory chain contains 3 multisubunit complexes succinate dehydrogenase (complex II, CII), ubiquinol-cytochrome c oxidoreductase (cytochrome b-c1 complex, complex III, CIII) and cytochrome c oxidase (complex IV, CIV), that cooperate to transfer electrons derived from NADH and succinate to molecular oxygen, creating an electrochemical gradient over the inner membrane that drives transmembrane transport and the ATP synthase. Cytochrome c oxidase is the component of the respiratory chain that catalyzes the reduction of oxygen to water. Electrons originating from reduced cytochrome c in the intermembrane space (IMS) are transferred via the dinuclear copper A center (CU(A)) of subunit 2 and heme A of subunit 1 to the active site in subunit 1, a binuclear center (BNC) formed by heme A3 and copper B (CU(B)). The BNC reduces molecular oxygen to 2 water molecules using 4 electrons from cytochrome c in the IMS and 4 protons from the mitochondrial matrix. The polypeptide is Cytochrome c oxidase subunit 2 (COX2) (Kluyveromyces lactis (strain ATCC 8585 / CBS 2359 / DSM 70799 / NBRC 1267 / NRRL Y-1140 / WM37) (Yeast)).